Consider the following 450-residue polypeptide: Deoxyguanosinetriphosphate triphosphohydrolase-like protein (450 aa).

One can recognise an HD domain in the interval 61 to 274; the sequence is RLTHSLEVAQ…MELADDIAYA (214 aa).

This sequence belongs to the dGTPase family. Type 2 subfamily.

In Histophilus somni (strain 2336) (Haemophilus somnus), this protein is Deoxyguanosinetriphosphate triphosphohydrolase-like protein.